Here is an 89-residue protein sequence, read N- to C-terminus: Large ribosomal subunit protein uL30 (89 aa).

It belongs to the universal ribosomal protein uL30 family. In terms of assembly, part of the 50S ribosomal subunit.

This Myxococcus xanthus (strain DK1622) protein is Large ribosomal subunit protein uL30.